We begin with the raw amino-acid sequence, 29 residues long: Beta-theraphotoxin-Gr1a (29 aa).

Cystine bridges form between Cys-2/Cys-16, Cys-9/Cys-21, and Cys-15/Cys-25.

It belongs to the neurotoxin 30 (phrixotoxin) family. Expressed by the venom gland.

The protein localises to the secreted. Functionally, inhibits voltage-gated sodium channels Nav1.1/SCN1A (IC(50)=630 nM), Nav1.2/SCN2A (IC(50)=230 nM), Nav1.3/SCN3A (IC(50)=770 nM), Nav1.4/SCN4A (IC(50)=1290 nM), Nav1.6/SCN8A (IC(50)=630 nM), Nav1.7/SCN9A (IC(50)=15.3-1000 nM) and potassium channels Kv11.1/KCNH2 (IC(50)=4.2 uM). This chain is Beta-theraphotoxin-Gr1a, found in Grammostola rosea (Chilean rose tarantula).